Reading from the N-terminus, the 98-residue chain is Co-chaperonin GroES (98 aa).

It belongs to the GroES chaperonin family. As to quaternary structure, heptamer of 7 subunits arranged in a ring. Interacts with the chaperonin GroEL.

Its subcellular location is the cytoplasm. Functionally, together with the chaperonin GroEL, plays an essential role in assisting protein folding. The GroEL-GroES system forms a nano-cage that allows encapsulation of the non-native substrate proteins and provides a physical environment optimized to promote and accelerate protein folding. GroES binds to the apical surface of the GroEL ring, thereby capping the opening of the GroEL channel. This Neorickettsia sennetsu (strain ATCC VR-367 / Miyayama) (Ehrlichia sennetsu) protein is Co-chaperonin GroES.